The primary structure comprises 214 residues: Phosphoenolpyruvate guanylyltransferase (214 aa).

Phosphoenolpyruvate is bound by residues T139, G155, and S158.

It belongs to the CofC family.

It carries out the reaction phosphoenolpyruvate + GTP + H(+) = enolpyruvoyl-2-diphospho-5'-guanosine + diphosphate. It participates in cofactor biosynthesis; coenzyme F420 biosynthesis. Its function is as follows. Guanylyltransferase that catalyzes the activation of phosphoenolpyruvate (PEP) as enolpyruvoyl-2-diphospho-5'-guanosine, via the condensation of PEP with GTP. It is involved in the biosynthesis of coenzyme F420, a hydride carrier cofactor. This Salinispora arenicola (strain CNS-205) protein is Phosphoenolpyruvate guanylyltransferase.